The sequence spans 641 residues: Chaperone protein DnaK (641 aa).

A Phosphothreonine; by autocatalysis modification is found at Thr199. The segment covering 603-613 has biased composition (polar residues); it reads YTQQGGTAGSE. A disordered region spans residues 603–641; the sequence is YTQQGGTAGSETHSHEKAGGSGGDDVVDAEFEEVRDDKR. Residues 627-641 are compositionally biased toward acidic residues; it reads DVVDAEFEEVRDDKR.

This sequence belongs to the heat shock protein 70 family.

Functionally, acts as a chaperone. The chain is Chaperone protein DnaK from Methylococcus capsulatus (strain ATCC 33009 / NCIMB 11132 / Bath).